Consider the following 423-residue polypeptide: MLDTLLINIGQLLTMDQEDGLLRREAMNTLPVIENGAVGIENGVITFVGTAEEAKGLQAREVIDCGGKMVSPGLVDPHTHLVFGGSRENEIALKLQGVPYLEILEQGGGILATVNATKQASKEELVQKAKFHLDRMLSFGVTTVEAKSGYGLDDETEWKQLEATAQLQKEHPVDIVSTFLGAHAVPKEYKGRSKEFLQWMLDLLPEMKEKQLAEFVDIFCETGVFSVEESKEFLLKAKELGFDVKIHADEIDPLGGAEAAAEIGAASADHLVGASDKGIEMLANSNTVATLLPGTTFYLNKESFARGRKMIDEGVAVALATDFNPGSCPTENIQLIMSIAMLKLKMTPEEVWNAVTVNSSYAINRGDVAGKIRVGRKADLVLWDAYNYAYVPYHYGVSHVNTVWKNGNIAYTRGEQSWSTATI.

Residues histidine 78 and histidine 80 each contribute to the Fe(3+) site. Zn(2+) is bound by residues histidine 78 and histidine 80. Arginine 87, tyrosine 150, and histidine 183 together coordinate 4-imidazolone-5-propanoate. Position 150 (tyrosine 150) interacts with N-formimidoyl-L-glutamate. Histidine 247 contacts Fe(3+). Residue histidine 247 coordinates Zn(2+). Position 250 (glutamate 250) interacts with 4-imidazolone-5-propanoate. Aspartate 322 contributes to the Fe(3+) binding site. A Zn(2+)-binding site is contributed by aspartate 322. N-formimidoyl-L-glutamate is bound by residues asparagine 324 and glycine 326. Serine 327 is a 4-imidazolone-5-propanoate binding site.

Belongs to the metallo-dependent hydrolases superfamily. HutI family. It depends on Zn(2+) as a cofactor. Fe(3+) serves as cofactor.

It is found in the cytoplasm. It catalyses the reaction 4-imidazolone-5-propanoate + H2O = N-formimidoyl-L-glutamate. It functions in the pathway amino-acid degradation; L-histidine degradation into L-glutamate; N-formimidoyl-L-glutamate from L-histidine: step 3/3. Functionally, catalyzes the hydrolytic cleavage of the carbon-nitrogen bond in imidazolone-5-propanoate to yield N-formimidoyl-L-glutamate. It is the third step in the universal histidine degradation pathway. The chain is Imidazolonepropionase from Bacillus cereus (strain B4264).